The following is a 2114-amino-acid chain: Protein CELLULOSE SYNTHASE INTERACTIVE 2 (2114 aa).

ARM repeat units follow at residues Thr-2–Leu-42, Lys-46–Lys-87, Lys-89–Leu-128, Asn-135–Gly-177, Asp-180–Arg-219, Thr-222–Ser-262, Glu-265–Thr-305, Gly-354–Gly-394, Val-396–Lys-435, Glu-479–Cys-519, Glu-522–Lys-561, Ala-563–Ala-595, Glu-601–Ser-640, Lys-643–Asn-682, Ala-708–Arg-750, Ser-774–Lys-816, His-825–Lys-865, Leu-870–Lys-910, Thr-914–Pro-953, Pro-994–Ala-1033, Pro-1044–Arg-1083, Asp-1087–Asn-1128, Glu-1141–Asp-1182, Asp-1185–Arg-1225, Pro-1227–Leu-1264, Phe-1265–Lys-1304, Arg-1312–Thr-1353, Glu-1355–Asp-1394, Lys-1396–Lys-1435, Ile-1454–Pro-1494, Leu-1496–Val-1525, Leu-1526–Glu-1564, Gln-1566–Val-1605, Thr-1606–Arg-1648, Asn-1650–Asp-1689, Ser-1690–Lys-1730, Arg-1732–Gln-1771, His-1772–Met-1813, Arg-1816–Ser-1855, His-1857–Thr-1898, Pro-1901–Gln-1940, and Thr-1949–Gly-1993. A C2 domain is found at Ser-1974 to Phe-2087.

In terms of assembly, associates with cellulase synthase (CESA) complexes. Binds to cortical microtubules.

The protein resides in the cell membrane. It localises to the cytoplasm. It is found in the cytoskeleton. Its function is as follows. Regulator of the microtubular cytoskeleton. Microtubule-associated protein involved in the association of cellulase synthase (CESA) complexes (CSCs) and cortical microtubules. Promotes dynamics of CSCs in the plasma membrane. Regulates primary cell wall biosynthesis and cellulose microfibrils organization. The protein is Protein CELLULOSE SYNTHASE INTERACTIVE 2 of Arabidopsis thaliana (Mouse-ear cress).